Here is a 285-residue protein sequence, read N- to C-terminus: Ribosomal RNA small subunit methyltransferase A (285 aa).

The S-adenosyl-L-methionine site is built by Asn29, Leu31, Gly56, Glu77, Asp102, and Asn123.

Belongs to the class I-like SAM-binding methyltransferase superfamily. rRNA adenine N(6)-methyltransferase family. RsmA subfamily.

It is found in the cytoplasm. The catalysed reaction is adenosine(1518)/adenosine(1519) in 16S rRNA + 4 S-adenosyl-L-methionine = N(6)-dimethyladenosine(1518)/N(6)-dimethyladenosine(1519) in 16S rRNA + 4 S-adenosyl-L-homocysteine + 4 H(+). Specifically dimethylates two adjacent adenosines (A1518 and A1519) in the loop of a conserved hairpin near the 3'-end of 16S rRNA in the 30S particle. May play a critical role in biogenesis of 30S subunits. The chain is Ribosomal RNA small subunit methyltransferase A from Clostridium perfringens (strain ATCC 13124 / DSM 756 / JCM 1290 / NCIMB 6125 / NCTC 8237 / Type A).